A 2278-amino-acid polypeptide reads, in one-letter code: Protein Ycf2 (2278 aa).

Position 1632 to 1639 (1632 to 1639) interacts with ATP; that stretch reads GSIGTGRS.

The protein belongs to the Ycf2 family.

The protein resides in the plastid. It is found in the chloroplast stroma. Its function is as follows. Probable ATPase of unknown function. Its presence in a non-photosynthetic plant (Epifagus virginiana) and experiments in tobacco indicate that it has an essential function which is probably not related to photosynthesis. This is Protein Ycf2 from Solanum bulbocastanum (Wild potato).